The primary structure comprises 440 residues: Ankyrin repeat and MYND domain-containing protein 2 (440 aa).

ANK repeat units lie at residues 45-74 (NGMT…DASC), 79-108 (HGYT…ETDV), and 159-188 (KLAG…NPLL). Zn(2+) contacts are provided by C320, C323, C332, C335, C341, C345, H353, and C357. Residues 320–357 (CTTCGEKGASKRCSVCKMVIYCDQTCQKTHWFAHKKMC) form an MYND-type zinc finger. Over residues 371–381 (AAKHKRQEEKN) the composition is skewed to basic and acidic residues. Positions 371-440 (AAKHKRQEEK…APTGPQLSEE (70 aa)) are disordered.

As to quaternary structure, interacts with the retinal-specific guanylyl cyclase GC1.

Its subcellular location is the cell projection. The protein resides in the cilium. Functionally, may be involved in the trafficking of signaling proteins to the cilia. This is Ankyrin repeat and MYND domain-containing protein 2 (Ankmy2) from Mus musculus (Mouse).